Consider the following 505-residue polypeptide: Oxidative stress-induced growth inhibitor 2 (505 aa).

Belongs to the OKL38 family. NADPH is required as a cofactor. As to expression, ubiquitous. Expressed at higher levels in testis and ovary.

Its subcellular location is the midbody. Functionally, monooxygenase catalytic activity. May be involved in meiosis or the maturation of germ cells. The protein is Oxidative stress-induced growth inhibitor 2 of Homo sapiens (Human).